The primary structure comprises 727 residues: Glycerol-3-phosphate dehydrogenase, mitochondrial (727 aa).

The N-terminal 42 residues, 1–42 (MAFQKAVKGTILVGGGALATVLGLSQFAHYRRKQMNLAYVKA), are a transit peptide targeting the mitochondrion. 71-99 (DILVIGGGATGSGCALDAVTRGLKTALVE) is a binding site for FAD. Tyrosine 601 carries the phosphotyrosine modification. EF-hand domains follow at residues 623–658 (SDID…INVQ) and 659–694 (MDEN…IQKG). Aspartate 672, asparagine 674, asparagine 676, glutamine 678, and glutamate 683 together coordinate Ca(2+).

The protein belongs to the FAD-dependent glycerol-3-phosphate dehydrogenase family. FAD is required as a cofactor.

Its subcellular location is the mitochondrion. It catalyses the reaction a quinone + sn-glycerol 3-phosphate = dihydroxyacetone phosphate + a quinol. The protein operates within polyol metabolism; glycerol degradation via glycerol kinase pathway; glycerone phosphate from sn-glycerol 3-phosphate (aerobic route): step 1/1. With respect to regulation, calcium-binding enhance the activity of the enzyme. In terms of biological role, calcium-responsive mitochondrial glycerol-3-phosphate dehydrogenase which seems to be a key component of the pancreatic beta-cell glucose-sensing device. The polypeptide is Glycerol-3-phosphate dehydrogenase, mitochondrial (GPD2) (Macaca fascicularis (Crab-eating macaque)).